The primary structure comprises 401 residues: Exodeoxyribonuclease 7 large subunit (401 aa).

The protein belongs to the XseA family. Heterooligomer composed of large and small subunits.

The protein resides in the cytoplasm. It carries out the reaction Exonucleolytic cleavage in either 5'- to 3'- or 3'- to 5'-direction to yield nucleoside 5'-phosphates.. Its function is as follows. Bidirectionally degrades single-stranded DNA into large acid-insoluble oligonucleotides, which are then degraded further into small acid-soluble oligonucleotides. This Clostridium botulinum (strain Loch Maree / Type A3) protein is Exodeoxyribonuclease 7 large subunit.